The following is a 321-amino-acid chain: Glucokinase (321 aa).

ATP is bound at residue 9-14 (ADIGGT).

Belongs to the bacterial glucokinase family.

It localises to the cytoplasm. It catalyses the reaction D-glucose + ATP = D-glucose 6-phosphate + ADP + H(+). The sequence is that of Glucokinase from Saccharophagus degradans (strain 2-40 / ATCC 43961 / DSM 17024).